Here is a 35-residue protein sequence, read N- to C-terminus: Jingzhaotoxin F6-27.63 (35 aa).

3 disulfide bridges follow: C2–C17, C9–C22, and C16–C29.

The protein belongs to the neurotoxin 10 (Hwtx-1) family. 49 (Jztx-F6) subfamily. In terms of tissue distribution, expressed by the venom gland.

The protein localises to the secreted. Its function is as follows. Probable ion channel inhibitor. This is Jingzhaotoxin F6-27.63 from Chilobrachys guangxiensis (Chinese earth tiger tarantula).